Reading from the N-terminus, the 203-residue chain is Transcriptional regulator GfcR 2 (203 aa).

The protein belongs to the purine/pyrimidine phosphoribosyltransferase family. GfcR subfamily.

The protein is Transcriptional regulator GfcR 2 of Methanosarcina acetivorans (strain ATCC 35395 / DSM 2834 / JCM 12185 / C2A).